A 404-amino-acid polypeptide reads, in one-letter code: uncharacterized protein (404 aa).

Polar residues predominate over residues 262-278 (VSTGDTSPCGTEDSSPA). Disordered regions lie at residues 262–307 (VSTG…SPSL) and 319–340 (MKKS…SGAD). Phosphoserine occurs at positions 268, 276, and 279. 2 positions are modified to phosphothreonine: threonine 290 and threonine 293. Residues serine 304, serine 306, serine 324, serine 358, and serine 362 each carry the phosphoserine modification. A compositionally biased stretch (basic and acidic residues) spans 319–336 (MKKSHSANDSEEFFREDD).

This is an uncharacterized protein from Mus musculus (Mouse).